A 444-amino-acid polypeptide reads, in one-letter code: E1B 55 kDa protein (444 aa).

The segment at 1–35 is disordered; that stretch reads MEQNADMEPDRQVNQRPPRFRARGAGVRGRGRVRR. Phosphoserine occurs at positions 438 and 439.

It belongs to the adenoviridae E1B 55 kDa protein family. In terms of assembly, interacts with host PML-4 and PML-5; this interaction promotes efficient subnuclear targeting of E1B-55K to PML nuclear bodies. Interacts with E4-ORF3 protein. Interacts with E4-ORF6 protein.

It is found in the host nucleus. The protein localises to the host cytoplasm. Its function is as follows. Plays a major role to prevent cellular inhibition of viral genome replication. Assembles an SCF-like E3 ubiquitin ligase complex based on the cellular proteins ELOB, ELOC, CUL5 and RBX1, in cooperation with viral E4orf6. This viral RING-type ligase ubiquitinates cellular substrates and targets them to proteasomal degradation: TP53/p53, LIG4, MRE11-RAD50-NBS1 (MRN) complex, ITGA3, DAXX and BLM. E1B-55K probably acts as the substrate-specific adapter of the SCF-like E3 ubiquitin ligase complex. Degradation of host TP53/p53 activity is essential for preventing E1A-induced TP53 accumulation that would otherwise lead to cell apoptosis and growth arrest. E1B-55K also inactivates TP53 transcription-factor activity by binding its transactivation domain. E1B-55K also functions as a SUMO1 E3 ligase for TP53 which causes the latter to be sequestered in promyelocytic leukemia (PML) nuclear bodies thereby contributing to maximal inhibition of TP53 function. This Canis lupus familiaris (Dog) protein is E1B 55 kDa protein.